Consider the following 218-residue polypeptide: Small ribosomal subunit protein uS3 (218 aa).

The region spanning 38–106 (IRKFIATKLA…RVHINIVEIK (69 aa)) is the KH type-2 domain.

It belongs to the universal ribosomal protein uS3 family. As to quaternary structure, part of the 30S ribosomal subunit. Forms a tight complex with proteins S10 and S14.

Its function is as follows. Binds the lower part of the 30S subunit head. Binds mRNA in the 70S ribosome, positioning it for translation. The chain is Small ribosomal subunit protein uS3 from Enterococcus faecalis (strain ATCC 700802 / V583).